The primary structure comprises 679 residues: Protein hook (679 aa).

Residues 6–123 (NEMYYSLLEW…RLLQLVLGCA (118 aa)) form the Calponin-homology (CH) domain. 2 coiled-coil regions span residues 135 to 437 (EIMC…LKCG) and 480 to 574 (QTAL…QEIL).

Belongs to the hook family. Homodimer. Interacts with microtubules via its N-terminus.

It localises to the cytoplasm. The protein resides in the cytoskeleton. It is found in the endosome. The protein localises to the synapse. Functionally, involved in endocytic trafficking by stabilizing organelles of the endocytic pathway. Probably acts as a cytoskeletal linker protein required to tether endosome vesicles to the cytoskeleton. Involved in modulation of endocytosis at stages required for down-regulation of membrane proteins that control synapse size. Not involved in synaptic vesicle recycling. Required in R7 cells for boss endocytosis into multivesicular bodies (MVBs). Has a role in regulating adult longevity. The protein is Protein hook of Drosophila simulans (Fruit fly).